Here is an 86-residue protein sequence, read N- to C-terminus: U1-theraphotoxin-Pc1a (86 aa).

The first 21 residues, 1–21, serve as a signal peptide directing secretion; the sequence is MMRVLIVTAVFTFFLVLTSSG. The propeptide occupies 22–49; it reads HDEDNEQRNILEGMFLDRAIETPKGLEE. 3 disulfide bridges follow: cysteine 53–cysteine 70, cysteine 60–cysteine 75, and cysteine 69–cysteine 80. Position 84 is a valine amide (valine 84).

In terms of tissue distribution, expressed by the venom gland.

The protein localises to the secreted. Possesses strong antiplasmodial activity against the intra-erythrocyte stage of P.falciparum in vitro. IC(50) for inhibiting P.falciparum growth is 1.59 uM. Interacts with infected and healthy erythrocytes. Does not lyse erythrocytes, is not cytotoxic to nucleated mammalian cells, and does not inhibit neuromuscular function. Has neither antibacterial nor antifungal activity. This Psalmopoeus cambridgei (Trinidad chevron tarantula) protein is U1-theraphotoxin-Pc1a.